A 299-amino-acid polypeptide reads, in one-letter code: Oxygen-dependent coproporphyrinogen-III oxidase (299 aa).

Residue Ser92 coordinates substrate. 2 residues coordinate a divalent metal cation: His96 and His106. His106 acts as the Proton donor in catalysis. 108–110 (NVR) lines the substrate pocket. The a divalent metal cation site is built by His145 and His175. The interval 240–275 (YVEFNLVWDRGTLFGLQTGGRTESILMSMPPLVRWE) is important for dimerization. 258-260 (GGR) is a substrate binding site.

It belongs to the aerobic coproporphyrinogen-III oxidase family. Homodimer. A divalent metal cation serves as cofactor.

It localises to the cytoplasm. It carries out the reaction coproporphyrinogen III + O2 + 2 H(+) = protoporphyrinogen IX + 2 CO2 + 2 H2O. The protein operates within porphyrin-containing compound metabolism; protoporphyrin-IX biosynthesis; protoporphyrinogen-IX from coproporphyrinogen-III (O2 route): step 1/1. Involved in the heme biosynthesis. Catalyzes the aerobic oxidative decarboxylation of propionate groups of rings A and B of coproporphyrinogen-III to yield the vinyl groups in protoporphyrinogen-IX. This chain is Oxygen-dependent coproporphyrinogen-III oxidase, found in Salmonella newport (strain SL254).